The following is a 62-amino-acid chain: Defensin BmKDfsin4 (62 aa).

An N-terminal signal peptide occupies residues 1-24; sequence MKTIVLLFVLALVFCTLEMGIVEA. 3 cysteine pairs are disulfide-bonded: C28–C49, C35–C57, and C39–C59.

The protein belongs to the invertebrate defensin family. Type 2 subfamily.

It localises to the secreted. Functionally, dual-function peptide with antimicrobial and potassium channel-blocking activities. Shows inhibitory activity against Gram-positive bacteria such as S.aureus, B.subtilis, and M.luteus as well as methicillin-resistant S.aureus (MIC=0.1-20 uM). Does not act on bacteria by disrupting membranes. Also moderately inhibits Kv1.1/KCNA1 (25.2% inhibition at 1 uM), Kv1.2/KCNA2 (30.5% inhibition at 1 uM), and Kv1.3/KCNA3 potassium channels (IC(50)=510.2 nM, 61% inhibition at 1 uM). Inhibits potassium channels by interacting with the pore region. Does not show hemolytic activity. In vitro, dose-dependently decreases the production of Hepatitis B virus (HBV) DNA and HBV viral proteins in both culture medium and cell lysate. This chain is Defensin BmKDfsin4, found in Olivierus martensii (Manchurian scorpion).